The following is a 751-amino-acid chain: Photosystem I P700 chlorophyll a apoprotein A1 (751 aa).

8 helical membrane passes run 73–96 (VFSA…FHGA), 159–182 (LYIT…FHYH), 198–222 (LNHH…HVSL), 294–312 (VAHH…GHMY), 349–372 (WHAQ…QHMY), 388–414 (LSLF…IFMV), 436–458 (AIIS…LYIH), and 533–551 (FLVH…LILL). The [4Fe-4S] cluster site is built by Cys575 and Cys584. The next 2 helical transmembrane spans lie at 591 to 612 (HVFL…HFSW) and 665 to 687 (LSAY…MFLF). Chlorophyll a' is bound at residue His676. Met684 and Tyr692 together coordinate chlorophyll a. Position 693 (Trp693) interacts with phylloquinone. A helical transmembrane segment spans residues 725 to 745 (AVGVAHYLLGGIATTWSFFLA).

The protein belongs to the PsaA/PsaB family. The PsaA/B heterodimer binds the P700 chlorophyll special pair and subsequent electron acceptors. PSI consists of a core antenna complex that captures photons, and an electron transfer chain that converts photonic excitation into a charge separation. The eukaryotic PSI reaction center is composed of at least 11 subunits. P700 is a chlorophyll a/chlorophyll a' dimer, A0 is one or more chlorophyll a, A1 is one or both phylloquinones and FX is a shared 4Fe-4S iron-sulfur center. serves as cofactor.

The protein resides in the plastid. Its subcellular location is the chloroplast thylakoid membrane. It carries out the reaction reduced [plastocyanin] + hnu + oxidized [2Fe-2S]-[ferredoxin] = oxidized [plastocyanin] + reduced [2Fe-2S]-[ferredoxin]. In terms of biological role, psaA and PsaB bind P700, the primary electron donor of photosystem I (PSI), as well as the electron acceptors A0, A1 and FX. PSI is a plastocyanin/cytochrome c6-ferredoxin oxidoreductase, converting photonic excitation into a charge separation, which transfers an electron from the donor P700 chlorophyll pair to the spectroscopically characterized acceptors A0, A1, FX, FA and FB in turn. Oxidized P700 is reduced on the lumenal side of the thylakoid membrane by plastocyanin or cytochrome c6. This chain is Photosystem I P700 chlorophyll a apoprotein A1, found in Euglena gracilis.